A 276-amino-acid polypeptide reads, in one-letter code: Undecaprenyl-diphosphatase (276 aa).

7 helical membrane passes run 48-68 (AANSFKVVIQLGSILAVAIVF), 92-112 (LTIAQIAVGLVPAAVLGFLFE), 119-139 (LFSVRTVAYGLIAGAVLMLIA), 155-175 (ITYKQAFCVGLFQCLALWPGF), 196-216 (ADFTFIMAIPIMAGASLLKLV), 229-249 (FFLVGFICAFVVALLVVKFFL), and 255-275 (IKLVPFAIYRVILGIILIMLV).

This sequence belongs to the UppP family.

It is found in the cell membrane. The enzyme catalyses di-trans,octa-cis-undecaprenyl diphosphate + H2O = di-trans,octa-cis-undecaprenyl phosphate + phosphate + H(+). In terms of biological role, catalyzes the dephosphorylation of undecaprenyl diphosphate (UPP). Confers resistance to bacitracin. This chain is Undecaprenyl-diphosphatase, found in Bacillus velezensis (strain DSM 23117 / BGSC 10A6 / LMG 26770 / FZB42) (Bacillus amyloliquefaciens subsp. plantarum).